Reading from the N-terminus, the 275-residue chain is uncharacterized protein (275 aa).

It localises to the virion. This is an uncharacterized protein from Acanthamoeba polyphaga (Amoeba).